The following is a 318-amino-acid chain: Olfactory receptor-like protein COR3 (318 aa).

Residues 1-26 (MASGNCTTPTTFILSGLTDNPGLQMP) are Extracellular-facing. N-linked (GlcNAc...) asparagine glycosylation occurs at Asn-5. Residues 27–49 (LFMVFLAIYTITLLTNLGLIRLI) form a helical membrane-spanning segment. The Cytoplasmic segment spans residues 50-57 (SVDLHLQT). The helical transmembrane segment at 58-79 (PMYIFLQNLSFTDAAYSTVITP) threads the bilayer. The Extracellular portion of the chain corresponds to 80–100 (KMLATFLEERKTISYVGCILQ). A disulfide bond links Cys-97 and Cys-179. The helical transmembrane segment at 101–120 (YFSFVLLTTSECLLLAVMAY) threads the bilayer. Residues 121–139 (DRYVAICKPLLYPAIMTKA) lie on the Cytoplasmic side of the membrane. The chain crosses the membrane as a helical span at residues 140–164 (VCWRLVESLYFLAFLNSLVHTCGLL). Topologically, residues 165 to 205 (KLSFCYSNVVNHFFCDISPLFQISSSSIAISELLVIISGSL) are extracellular. The chain crosses the membrane as a helical span at residues 206–226 (FVMSSIIIILISYVFIILTVV). At 227 to 239 (MIRSKDGKYKAFS) the chain is on the cytoplasmic side. The chain crosses the membrane as a helical span at residues 240–260 (TCTSHLMAVSLFHGTVIFMYL). The Extracellular segment spans residues 261–271 (RPVKLFSLDTD). Residues 272 to 292 (KIASLFYTVVIPMLNPLIYSW) traverse the membrane as a helical segment. At 293–318 (RNKEVKDALRRLTATTFGFIDSKAVQ) the chain is on the cytoplasmic side.

The protein belongs to the G-protein coupled receptor 1 family.

The protein localises to the cell membrane. In terms of biological role, odorant receptor. This is Olfactory receptor-like protein COR3 (COR3) from Gallus gallus (Chicken).